Consider the following 162-residue polypeptide: Transcriptional repressor NrdR (162 aa).

The segment at 1 to 21 (MNCPDCGDEQTRVIDTETSAD) is disordered. A zinc finger lies at 3–34 (CPDCGDEQTRVIDTETSADGTSVRRRRECQRC). The ATP-cone domain maps to 49-139 (LQVKKRNGTI…VYKAFSEPQE (91 aa)).

It belongs to the NrdR family. The cofactor is Zn(2+).

Functionally, negatively regulates transcription of bacterial ribonucleotide reductase nrd genes and operons by binding to NrdR-boxes. The polypeptide is Transcriptional repressor NrdR (Halorubrum lacusprofundi (strain ATCC 49239 / DSM 5036 / JCM 8891 / ACAM 34)).